The sequence spans 122 residues: MKPFLAIIFCFLILGVDSQRWFQFMKEAGQGSTDMWRAYSDMREANWKNSDKYFHARGNYDAAKRGPGGAWAAKVISDAREGIQRFTGRGAADSRADQFANKWGRSGKDPNHFRPAGLPSKY.

The N-terminal stretch at 1–18 (MKPFLAIIFCFLILGVDS) is a signal peptide. A disordered region spans residues 100–122 (ANKWGRSGKDPNHFRPAGLPSKY).

Belongs to the SAA family. Expressed by the liver; secreted in plasma.

The protein localises to the secreted. Functionally, major acute phase reactant. Apolipoprotein of the HDL complex. In vitro exhibits antimicrobial activity against Escherichia coli, Streptococcus uberis and Pseudomonas aeruginosa. The sequence is that of Serum amyloid A-3 protein (SAA3) from Mesocricetus auratus (Golden hamster).